The chain runs to 337 residues: Fructose-1,6-bisphosphatase class 1 (337 aa).

4 residues coordinate Mg(2+): Glu91, Asp113, Leu115, and Asp116. Substrate is bound by residues 116-119 (DGSS), Asn209, Tyr242, and Lys275. Mg(2+) is bound at residue Glu281.

Belongs to the FBPase class 1 family. In terms of assembly, homotetramer. Mg(2+) serves as cofactor.

Its subcellular location is the cytoplasm. The enzyme catalyses beta-D-fructose 1,6-bisphosphate + H2O = beta-D-fructose 6-phosphate + phosphate. It functions in the pathway carbohydrate biosynthesis; gluconeogenesis. The chain is Fructose-1,6-bisphosphatase class 1 from Nitratidesulfovibrio vulgaris (strain DP4) (Desulfovibrio vulgaris).